Consider the following 379-residue polypeptide: ATP phosphoribosyltransferase regulatory subunit (379 aa).

It belongs to the class-II aminoacyl-tRNA synthetase family. HisZ subfamily. Heteromultimer composed of HisG and HisZ subunits.

The protein localises to the cytoplasm. Its pathway is amino-acid biosynthesis; L-histidine biosynthesis; L-histidine from 5-phospho-alpha-D-ribose 1-diphosphate: step 1/9. Its function is as follows. Required for the first step of histidine biosynthesis. May allow the feedback regulation of ATP phosphoribosyltransferase activity by histidine. This is ATP phosphoribosyltransferase regulatory subunit from Gluconobacter oxydans (strain 621H) (Gluconobacter suboxydans).